A 370-amino-acid chain; its full sequence is DNA replication and repair protein RecF (370 aa).

30–37 lines the ATP pocket; sequence GQNGMGKT.

This sequence belongs to the RecF family.

The protein resides in the cytoplasm. The RecF protein is involved in DNA metabolism; it is required for DNA replication and normal SOS inducibility. RecF binds preferentially to single-stranded, linear DNA. It also seems to bind ATP. The sequence is that of DNA replication and repair protein RecF from Bacteroides fragilis (strain ATCC 25285 / DSM 2151 / CCUG 4856 / JCM 11019 / LMG 10263 / NCTC 9343 / Onslow / VPI 2553 / EN-2).